We begin with the raw amino-acid sequence, 36 residues long: Photosystem I reaction center subunit VIII (36 aa).

Residues 9–29 traverse the membrane as a helical segment; it reads ILVPLVGLVFPAITMVSLFLY.

It belongs to the PsaI family.

It localises to the plastid. It is found in the chloroplast thylakoid membrane. Its function is as follows. May help in the organization of the PsaL subunit. The chain is Photosystem I reaction center subunit VIII from Zygnema circumcarinatum (Green alga).